We begin with the raw amino-acid sequence, 222 residues long: Ras-related protein Rab-21 (222 aa).

Position 2 is an N-acetylalanine (A2). Residues G25, G28, K29, T30, S31, N42, D43, H45, T47, and T48 each coordinate GTP. Mg(2+) is bound at residue T30. Residues 40–53 carry the Switch 1 motif; it reads KFNDKHITTLQASF. Positions 48 and 71 each coordinate Mg(2+). Positions 73-91 match the Switch 2 motif; sequence AGQERFHALGPIYYRDSNG. Positions 74, 129, 130, 132, 160, and 161 each coordinate GTP. 2 S-geranylgeranyl cysteine lipidation sites follow: C218 and C219. The residue at position 219 (C219) is a Cysteine methyl ester. A propeptide spans 220-222 (removed in mature form); that stretch reads SSG.

The protein belongs to the small GTPase superfamily. Rab family. In terms of assembly, interacts with the cytoplasmic tail of integrins ITGA1, ITGA2, ITGA5, ITGA6, ITGA11 and ITGB1; this interaction is dependent upon its GDP/GTP cycle. Interacts with RABGEF1 (via VPS9 domain). Interacts with ANKRD27. Interacts (in GTP-bound form) with VAMP8 in response to starvation; the interaction probably regulates VAMP8 endolysosomal trafficking. Interacts (active GTP-bound form) with TMED10; the interaction is indirect and regulates TMED10 abundance and localization at the Golgi. Requires Mg(2+) as cofactor.

Its subcellular location is the endoplasmic reticulum membrane. The protein localises to the golgi apparatus. It is found in the trans-Golgi network. The protein resides in the golgi apparatus membrane. It localises to the early endosome membrane. Its subcellular location is the cytoplasmic vesicle membrane. The protein localises to the cleavage furrow. It is found in the cell projection. The protein resides in the neuron projection. The enzyme catalyses GTP + H2O = GDP + phosphate + H(+). Its activity is regulated as follows. Regulated by guanine nucleotide exchange factors (GEFs) including ANKRD27 and RABGEF1, which promote the exchange of bound GDP for free GTP. Regulated by GTPase activating proteins (GAPs) which increase the GTP hydrolysis activity. Inhibited by GDP dissociation inhibitors (GDIs). Its function is as follows. The small GTPases Rab are key regulators of intracellular membrane trafficking, from the formation of transport vesicles to their fusion with membranes. Rabs cycle between an inactive GDP-bound form and an active GTP-bound form that is able to recruit to membranes different sets of downstream effectors directly responsible for vesicle formation, movement, tethering and fusion. RAB21 is involved in membrane trafficking control. Regulates integrin internalization and recycling, but does not influence the traffic of endosomally translocated receptors in general. As a result, may regulate cell adhesion and migration. During the mitosis of adherent cells, controls the endosomal trafficking of integrins which is required for the successful completion of cytokinesis. Involved in neurite growth. Following SBF2/MTMT13-mediated activation in response to starvation-induced autophagy, binds to and regulates SNARE protein VAMP8 endolysosomal transport required for SNARE-mediated autophagosome-lysosome fusion. Modulates protein levels of the cargo receptors TMED2 and TMED10, and required for appropriate Golgi localization of TMED10. The chain is Ras-related protein Rab-21 (RAB21) from Bos taurus (Bovine).